Here is a 105-residue protein sequence, read N- to C-terminus: Large ribosomal subunit protein uL24 (105 aa).

It belongs to the universal ribosomal protein uL24 family. Part of the 50S ribosomal subunit.

One of two assembly initiator proteins, it binds directly to the 5'-end of the 23S rRNA, where it nucleates assembly of the 50S subunit. Its function is as follows. One of the proteins that surrounds the polypeptide exit tunnel on the outside of the subunit. The protein is Large ribosomal subunit protein uL24 of Psychrobacter cryohalolentis (strain ATCC BAA-1226 / DSM 17306 / VKM B-2378 / K5).